The following is a 62-amino-acid chain: Large ribosomal subunit protein uL30 (62 aa).

Belongs to the universal ribosomal protein uL30 family. In terms of assembly, part of the 50S ribosomal subunit.

The sequence is that of Large ribosomal subunit protein uL30 from Cereibacter sphaeroides (strain ATCC 17029 / ATH 2.4.9) (Rhodobacter sphaeroides).